The sequence spans 364 residues: Aminomethyltransferase (364 aa).

Belongs to the GcvT family. In terms of assembly, the glycine cleavage system is composed of four proteins: P, T, L and H.

It carries out the reaction N(6)-[(R)-S(8)-aminomethyldihydrolipoyl]-L-lysyl-[protein] + (6S)-5,6,7,8-tetrahydrofolate = N(6)-[(R)-dihydrolipoyl]-L-lysyl-[protein] + (6R)-5,10-methylene-5,6,7,8-tetrahydrofolate + NH4(+). In terms of biological role, the glycine cleavage system catalyzes the degradation of glycine. This is Aminomethyltransferase from Salmonella paratyphi C (strain RKS4594).